A 637-amino-acid chain; its full sequence is Proton myo-inositol cotransporter (637 aa).

At 1–65 the chain is on the cytoplasmic side; the sequence is MSRKASEDVE…AARRQFQRDE (65 aa). Residue S6 is modified to Phosphoserine. The segment at 16–38 is disordered; that stretch reads LSSLMGERRRRQPEPGAPGGERS. Phosphoserine is present on residues S44 and S47. A helical transmembrane segment spans residues 66-86; it reads TPAFVYAAAAFSALGGFLFGY. Topologically, residues 87–114 are extracellular; that stretch reads DTGVVSGAMLLLRRQMRLGAMWQELLVS. The chain crosses the membrane as a helical span at residues 115–135; the sequence is GAVGAAAVAALAGGALNGALG. Topologically, residues 136-137 are cytoplasmic; that stretch reads RR. The helical transmembrane segment at 138–158 threads the bilayer; that stretch reads SAILLASALCTVGSAVLAAAA. The Extracellular portion of the chain corresponds to 159-167; the sequence is NKETLLAGR. A helical transmembrane segment spans residues 168-188; that stretch reads LVVGLGIGIASMTVPVYIAEV. The Cytoplasmic segment spans residues 189 to 201; sequence SPPNLRGRLVTIN. Residues 202–222 form a helical membrane-spanning segment; that stretch reads TLFITGGQFFASVVDGAFSYL. Over 223 to 228 the chain is Extracellular; sequence QKDGWR. The helical transmembrane segment at 229-249 threads the bilayer; sequence YMLGLAAIPAVIQFLGFLFLP. Topologically, residues 250–313 are cytoplasmic; it reads ESPRWLIQKG…RMLSYPPTRR (64 aa). A helical transmembrane segment spans residues 314-334; sequence ALAVGCGLQMFQQLSGINTIM. Over 335–352 the chain is Extracellular; it reads YYSATILQMSGVEDDRLA. Residues 353-373 form a helical membrane-spanning segment; that stretch reads IWLASITAFTNFIFTLVGVWL. The Cytoplasmic segment spans residues 374 to 382; the sequence is VEKVGRRKL. A helical transmembrane segment spans residues 383–403; it reads TFGSLAGTTVALTILALGFLL. The Extracellular segment spans residues 404-497; that stretch reads SAQVSPRVTF…SFCPTPYSWT (94 aa). N-linked (GlcNAc...) asparagine glycans are attached at residues N422, N447, and N474. A helical membrane pass occupies residues 498-518; it reads ALVGLVLYLVFFAPGMGPMPW. The Cytoplasmic portion of the chain corresponds to 519-538; it reads TVNSEIYPLWARSTGNACSA. The helical transmembrane segment at 539–559 threads the bilayer; it reads GINWIFNVLVSLTFLHTAEYL. The Extracellular segment spans residues 560–562; the sequence is TYY. The helical transmembrane segment at 563–583 threads the bilayer; sequence GAFFLYAGFAAVGLLFVYGCL. Topologically, residues 584–637 are cytoplasmic; that stretch reads PETKGKKLEEIESLFDHRLCTCGTADSDEGRYIEYIRVKGSNYHLSDNDASDVE. Phosphoserine occurs at positions 629 and 634.

It belongs to the major facilitator superfamily. Sugar transporter (TC 2.A.1.1) family.

Its subcellular location is the cell membrane. The enzyme catalyses myo-inositol(out) + H(+)(out) = myo-inositol(in) + H(+)(in). Its function is as follows. H(+)-myo-inositol cotransporter. Can also transport related stereoisomers. The protein is Proton myo-inositol cotransporter of Rattus norvegicus (Rat).